The primary structure comprises 129 residues: Fluoride-specific ion channel FluC 2 (129 aa).

4 helical membrane-spanning segments follow: residues 4 to 24 (LDVM…WWIG), 39 to 59 (TFLI…LFGV), 65 to 85 (YGTM…TTFS), and 100 to 120 (GGLA…AAWL). The Na(+) site is built by glycine 79 and threonine 82.

It belongs to the fluoride channel Fluc/FEX (TC 1.A.43) family.

The protein localises to the cell inner membrane. It carries out the reaction fluoride(in) = fluoride(out). Its activity is regulated as follows. Na(+) is not transported, but it plays an essential structural role and its presence is essential for fluoride channel function. Its function is as follows. Fluoride-specific ion channel. Important for reducing fluoride concentration in the cell, thus reducing its toxicity. This Brucella suis biovar 1 (strain 1330) protein is Fluoride-specific ion channel FluC 2.